Here is a 150-residue protein sequence, read N- to C-terminus: Centrin-B (150 aa).

EF-hand domains lie at Asp12 to Glu46, Asp80 to Glu114, and Cys115 to Leu150. Ca(2+) is bound by residues Asp128, Asp130, Asp132, and Glu139.

This sequence belongs to the centrin family.

It is found in the cytoplasm. The protein localises to the cytoskeleton. Its subcellular location is the microtubule organizing center. The protein resides in the centrosome. Plays a fundamental role in microtubule-organizing center structure and function. The chain is Centrin-B (cenB) from Dictyostelium discoideum (Social amoeba).